The sequence spans 195 residues: Imidazoleglycerol-phosphate dehydratase (195 aa).

The protein belongs to the imidazoleglycerol-phosphate dehydratase family.

Its subcellular location is the cytoplasm. It carries out the reaction D-erythro-1-(imidazol-4-yl)glycerol 3-phosphate = 3-(imidazol-4-yl)-2-oxopropyl phosphate + H2O. It functions in the pathway amino-acid biosynthesis; L-histidine biosynthesis; L-histidine from 5-phospho-alpha-D-ribose 1-diphosphate: step 6/9. This Methylorubrum populi (strain ATCC BAA-705 / NCIMB 13946 / BJ001) (Methylobacterium populi) protein is Imidazoleglycerol-phosphate dehydratase.